A 149-amino-acid chain; its full sequence is Large ribosomal subunit protein bL9 (149 aa).

The protein belongs to the bacterial ribosomal protein bL9 family.

Binds to the 23S rRNA. In Haemophilus ducreyi (strain 35000HP / ATCC 700724), this protein is Large ribosomal subunit protein bL9.